Here is a 222-residue protein sequence, read N- to C-terminus: PKHD-type hydroxylase cce_3668 (222 aa).

In terms of domain architecture, Fe2OG dioxygenase spans 78–175; that stretch reads HIHSLRFSRY…RLVVVGWVHS (98 aa). Fe cation contacts are provided by His96, Asp98, and His156. Arg166 is a 2-oxoglutarate binding site.

Fe(2+) is required as a cofactor. L-ascorbate serves as cofactor.

The sequence is that of PKHD-type hydroxylase cce_3668 from Crocosphaera subtropica (strain ATCC 51142 / BH68) (Cyanothece sp. (strain ATCC 51142)).